Reading from the N-terminus, the 274-residue chain is Transcriptional activator PerA (274 aa).

An HTH araC/xylS-type domain is found at 168–265 (DRVIKVIELD…NTTPKKYNGV (98 aa)). 2 consecutive DNA-binding regions (H-T-H motif) follow at residues 185 to 206 (GDVSSSMFMSDSCLRKQLNKEN) and 232 to 255 (IDEISCLVGFNSTSYFIKVFKEYY).

Functionally, could help in the transcriptional activator of eaeA expression in enteropathogenic E.coli. However, it seems that it is PerC which acts as an activator. The sequence is that of Transcriptional activator PerA (perA) from Escherichia coli O127:H6 (strain E2348/69 / EPEC).